Reading from the N-terminus, the 537-residue chain is Prolyl 4-hydroxylase subunit alpha-2 (537 aa).

Positions 1-23 (MKLQVLVLVLLMSWFGVLSWVQA) are cleaved as a signal peptide. Asn117 is a glycosylation site (N-linked (GlcNAc...) asparagine). The TPR repeat unit spans residues 209-242 (SLVLDYLSYAVFQLGDLHRAVELTRRLLSLDPSH). N-linked (GlcNAc...) asparagine glycosylation occurs at Asn266. Residues 414 to 522 (TAELLQVANY…KWVSNKWFHE (109 aa)) form the Fe2OG dioxygenase domain. Positions 432 and 434 each coordinate Fe cation. Lys482 bears the N6-succinyllysine mark. Position 503 (His503) interacts with Fe cation. 2-oxoglutarate is bound at residue Lys513.

Belongs to the P4HA family. In terms of assembly, heterotetramer of two alpha-2 chains and two beta chains (P4HB) (the beta chain is the multi-functional PDI), where P4HB plays the role of a structural subunit; this tetramer catalyzes the formation of 4-hydroxyproline in collagen. Fe(2+) is required as a cofactor. The cofactor is L-ascorbate. Expressed at least in brain, heart and lung.

It localises to the endoplasmic reticulum lumen. It carries out the reaction L-prolyl-[collagen] + 2-oxoglutarate + O2 = trans-4-hydroxy-L-prolyl-[collagen] + succinate + CO2. With respect to regulation, inhibited by poly(L-proline) only at very high concentrations. Functionally, catalyzes the post-translational formation of 4-hydroxyproline in -Xaa-Pro-Gly- sequences in collagens and other proteins. This Mus musculus (Mouse) protein is Prolyl 4-hydroxylase subunit alpha-2 (P4ha2).